Consider the following 130-residue polypeptide: YopE regulator (130 aa).

Positive regulator of YopE. The chain is YopE regulator (yerA) from Yersinia enterocolitica serotype O:8 / biotype 1B (strain NCTC 13174 / 8081).